Here is a 668-residue protein sequence, read N- to C-terminus: tRNA 5-methylaminomethyl-2-thiouridine biosynthesis bifunctional protein MnmC (668 aa).

Positions Met1–Glu245 are tRNA (mnm(5)s(2)U34)-methyltransferase. Residues Ile270–Gly668 form an FAD-dependent cmnm(5)s(2)U34 oxidoreductase region.

In the N-terminal section; belongs to the methyltransferase superfamily. tRNA (mnm(5)s(2)U34)-methyltransferase family. It in the C-terminal section; belongs to the DAO family. The cofactor is FAD.

Its subcellular location is the cytoplasm. The enzyme catalyses 5-aminomethyl-2-thiouridine(34) in tRNA + S-adenosyl-L-methionine = 5-methylaminomethyl-2-thiouridine(34) in tRNA + S-adenosyl-L-homocysteine + H(+). Its function is as follows. Catalyzes the last two steps in the biosynthesis of 5-methylaminomethyl-2-thiouridine (mnm(5)s(2)U) at the wobble position (U34) in tRNA. Catalyzes the FAD-dependent demodification of cmnm(5)s(2)U34 to nm(5)s(2)U34, followed by the transfer of a methyl group from S-adenosyl-L-methionine to nm(5)s(2)U34, to form mnm(5)s(2)U34. The sequence is that of tRNA 5-methylaminomethyl-2-thiouridine biosynthesis bifunctional protein MnmC from Shigella flexneri serotype 5b (strain 8401).